Here is a 404-residue protein sequence, read N- to C-terminus: Glucose-1-phosphate adenylyltransferase (404 aa).

Residues Tyr-99, Gly-164, Glu-179–Lys-180, and Ser-197 contribute to the alpha-D-glucose 1-phosphate site.

Belongs to the bacterial/plant glucose-1-phosphate adenylyltransferase family.

The catalysed reaction is alpha-D-glucose 1-phosphate + ATP + H(+) = ADP-alpha-D-glucose + diphosphate. Its pathway is glycan biosynthesis; glycogen biosynthesis. In terms of biological role, involved in the biosynthesis of ADP-glucose, a building block, required in the biosynthesis of maltose-1-phosphate (M1P) and in the elongation reactions to produce linear alpha-1,4-glucans. Catalyzes the reaction between ATP and alpha-D-glucose 1-phosphate (G1P) to produce pyrophosphate and ADP-Glc. This chain is Glucose-1-phosphate adenylyltransferase, found in Mycolicibacterium gilvum (strain PYR-GCK) (Mycobacterium gilvum (strain PYR-GCK)).